The following is a 257-amino-acid chain: Trans-aconitate 2-methyltransferase (257 aa).

Belongs to the methyltransferase superfamily. Tam family.

The protein localises to the cytoplasm. It catalyses the reaction trans-aconitate + S-adenosyl-L-methionine = (E)-3-(methoxycarbonyl)pent-2-enedioate + S-adenosyl-L-homocysteine. Functionally, catalyzes the S-adenosylmethionine monomethyl esterification of trans-aconitate. This Sinorhizobium fredii (strain NBRC 101917 / NGR234) protein is Trans-aconitate 2-methyltransferase.